A 316-amino-acid polypeptide reads, in one-letter code: Conjugated bile acid hydrolase (316 aa).

The Nucleophile role is filled by C2. Deoxycholate-binding residues include C2 and R18. N81 contributes to the taurine binding site.

This sequence belongs to the peptidase C59 family.

The catalysed reaction is cholate + taurine = taurocholate + H2O. It carries out the reaction taurodeoxycholate + H2O = deoxycholate + taurine. It catalyses the reaction taurochenodeoxycholate + H2O = chenodeoxycholate + taurine. The enzyme catalyses glycocholate + H2O = cholate + glycine. It functions in the pathway lipid metabolism; bile acid biosynthesis. Glycocholate hydrolysis is inhibited by various previously identified BSH inhibitors, including KIO(3), NaHIO(3), NaIO(4), CuCl(2), menadione, riboflavin, gossypetin, and the antibiotics oxytetracycline, demeclocycline hydrochloride and methacycline hydrochloride. Bile salt hydrolase that catalyzes the deconjugation of glycine- and taurine-linked bile salts, which occurs naturally in the intestines of animals, releasing amino acid residues and deconjugated bile salts (bile acids). Can hydrolyze the amide bond in the bile salts taurocholate (TCA), taurodeoxycholate (TDCA), taurochenodeoxycholate (TCDCA), taurohyodeoxycholate (THDCA) and tauroursodeoxycholate (TUDCA). Oh et al. did not detect activity with the glycine-conjugated bile salts glycocholate (GCA), glycodeoxycholate (GDCA) and glycochenodeoxycholate (GCDCA). However, a later study shows activity toward glycocholate (GCA). This chain is Conjugated bile acid hydrolase, found in Lactobacillus acidophilus.